Reading from the N-terminus, the 506-residue chain is Histidine--tRNA ligase (506 aa).

This sequence belongs to the class-II aminoacyl-tRNA synthetase family. As to quaternary structure, homodimer.

Its subcellular location is the cytoplasm. It catalyses the reaction tRNA(His) + L-histidine + ATP = L-histidyl-tRNA(His) + AMP + diphosphate + H(+). This chain is Histidine--tRNA ligase (hisS), found in Bradyrhizobium diazoefficiens (strain JCM 10833 / BCRC 13528 / IAM 13628 / NBRC 14792 / USDA 110).